A 327-amino-acid polypeptide reads, in one-letter code: Cyclin-A3-3 (327 aa).

The protein belongs to the cyclin family. Cyclin AB subfamily.

The polypeptide is Cyclin-A3-3 (CYCA3-3) (Arabidopsis thaliana (Mouse-ear cress)).